Consider the following 317-residue polypeptide: Ribosomal RNA small subunit methyltransferase H (317 aa).

S-adenosyl-L-methionine is bound by residues 34 to 36, D53, F80, D98, and Q105; that span reads GGH.

This sequence belongs to the methyltransferase superfamily. RsmH family.

It is found in the cytoplasm. The catalysed reaction is cytidine(1402) in 16S rRNA + S-adenosyl-L-methionine = N(4)-methylcytidine(1402) in 16S rRNA + S-adenosyl-L-homocysteine + H(+). Functionally, specifically methylates the N4 position of cytidine in position 1402 (C1402) of 16S rRNA. The chain is Ribosomal RNA small subunit methyltransferase H from Tropheryma whipplei (strain TW08/27) (Whipple's bacillus).